A 354-amino-acid polypeptide reads, in one-letter code: Uroporphyrinogen decarboxylase (354 aa).

Substrate contacts are provided by residues 27-31 (RQAGR), Phe46, Asp77, Tyr153, Thr208, and His326.

The protein belongs to the uroporphyrinogen decarboxylase family. As to quaternary structure, homodimer.

It is found in the cytoplasm. It carries out the reaction uroporphyrinogen III + 4 H(+) = coproporphyrinogen III + 4 CO2. The protein operates within porphyrin-containing compound metabolism; protoporphyrin-IX biosynthesis; coproporphyrinogen-III from 5-aminolevulinate: step 4/4. Its function is as follows. Catalyzes the decarboxylation of four acetate groups of uroporphyrinogen-III to yield coproporphyrinogen-III. This is Uroporphyrinogen decarboxylase from Neisseria meningitidis serogroup B (strain ATCC BAA-335 / MC58).